We begin with the raw amino-acid sequence, 150 residues long: Large ribosomal subunit protein bL9 (150 aa).

This sequence belongs to the bacterial ribosomal protein bL9 family.

Functionally, binds to the 23S rRNA. The sequence is that of Large ribosomal subunit protein bL9 from Renibacterium salmoninarum (strain ATCC 33209 / DSM 20767 / JCM 11484 / NBRC 15589 / NCIMB 2235).